The following is a 130-amino-acid chain: Small ribosomal subunit protein uS8 (130 aa).

This sequence belongs to the universal ribosomal protein uS8 family. Part of the 30S ribosomal subunit. Contacts proteins S5 and S12.

One of the primary rRNA binding proteins, it binds directly to 16S rRNA central domain where it helps coordinate assembly of the platform of the 30S subunit. The protein is Small ribosomal subunit protein uS8 of Aliivibrio salmonicida (strain LFI1238) (Vibrio salmonicida (strain LFI1238)).